We begin with the raw amino-acid sequence, 114 residues long: uncharacterized protein (114 aa).

This is an uncharacterized protein from Acanthamoeba polyphaga mimivirus (APMV).